The following is a 67-amino-acid chain: Large ribosomal subunit protein bL35 (67 aa).

Over residues 1 to 16 (MPKMKTKSSAKKRFRV) the composition is skewed to basic residues. A disordered region spans residues 1-24 (MPKMKTKSSAKKRFRVRPGGTVKR).

It belongs to the bacterial ribosomal protein bL35 family.

This Paracidovorax citrulli (strain AAC00-1) (Acidovorax citrulli) protein is Large ribosomal subunit protein bL35.